We begin with the raw amino-acid sequence, 579 residues long: XK-related protein 7 (579 aa).

Residues 1-18 (MAAKSDGAAASAGPDPEG) show a composition bias toward low complexity. The tract at residues 1–40 (MAAKSDGAAASAGPDPEGAAGGARGSAGGRGEAAAAAGPP) is disordered. Gly residues predominate over residues 19–31 (AAGGARGSAGGRG). A run of 2 helical transmembrane segments spans residues 59–79 (WVLCALLVFFSDGATDLWLAA) and 89–109 (YFSLTLLFVLLPSLVVQLLSF). The tract at residues 146 to 165 (GAFRTKEGSPEPGPQPAPSS) is disordered. Transmembrane regions (helical) follow at residues 260–280 (LLPALSTSASLVSLAWTLASY), 314–334 (GLAFALFASVYKLYFGICIVG), 355–375 (GEEIIYNMVVGIIYIFCWFNV), 384–404 (MTLYHCIVLLENAALTGFWYS), and 415–435 (LIMVCVVASSFALGIFFMCVY). The disordered stretch occupies residues 466 to 510 (ADAITSPPRSLPRTTGAERDGASAGERAGTPTPPVFQVRPGLPPT).

It belongs to the XK family.

It is found in the cell membrane. In Pan troglodytes (Chimpanzee), this protein is XK-related protein 7 (XKR7).